The sequence spans 527 residues: tRNA (uracil(54)-C(5))-methyltransferase (527 aa).

A TRAM domain is found at 107 to 167 (PFERFQEIEV…DTYALADFLE (61 aa)). Residues C182, C188, C191, and C276 each coordinate [4Fe-4S] cluster. S-adenosyl-L-methionine is bound by residues Q347, Y383, E404, and D451. Catalysis depends on C478, which acts as the Nucleophile. Residue E517 is the Proton acceptor of the active site.

It belongs to the class I-like SAM-binding methyltransferase superfamily. RNA M5U methyltransferase family.

The catalysed reaction is uridine(54) in tRNA + S-adenosyl-L-methionine = 5-methyluridine(54) in tRNA + S-adenosyl-L-homocysteine + H(+). Catalyzes the formation of 5-methyl-uridine at position 54 (m5U54) in all tRNA. May also have a role in tRNA stabilization or maturation. This is tRNA (uracil(54)-C(5))-methyltransferase from Schizosaccharomyces pombe (strain 972 / ATCC 24843) (Fission yeast).